A 41-amino-acid polypeptide reads, in one-letter code: Large ribosomal subunit protein bL36 (41 aa).

It belongs to the bacterial ribosomal protein bL36 family.

This Phenylobacterium zucineum (strain HLK1) protein is Large ribosomal subunit protein bL36.